The following is a 317-amino-acid chain: 1-phosphofructokinase (317 aa).

ATP contacts are provided by residues 223 to 228 (SMGAEG) and 254 to 255 (GD). Residue Asp-255 is the Proton acceptor of the active site.

Belongs to the carbohydrate kinase PfkB family.

The enzyme catalyses beta-D-fructose 1-phosphate + ATP = beta-D-fructose 1,6-bisphosphate + ADP + H(+). In terms of biological role, catalyzes the ATP-dependent phosphorylation of fructose-l-phosphate to fructose-l,6-bisphosphate. This is 1-phosphofructokinase from Vibrio cholerae serotype O1 (strain ATCC 39315 / El Tor Inaba N16961).